The primary structure comprises 361 residues: Polygalacturonase (361 aa).

The signal sequence occupies residues 1-18 (MISANSLLISTLCAFAIA). A disulfide bond links Cys-27 and Cys-43. 5 PbH1 repeats span residues 155-185 (CSDL…DVGS), 186-207 (SSNV…AVNS), 208-228 (GSTI…SVGS), 237-258 (VNGF…RIKT), and 266-288 (VTNV…VIEG). Catalysis depends on Asp-200, which acts as the Proton donor. Cys-202 and Cys-218 are joined by a disulfide. The active site involves His-222. N-linked (GlcNAc...) asparagine glycosylation is found at Asn-318 and Asn-330. The cysteines at positions 350 and 361 are disulfide-linked.

Belongs to the glycosyl hydrolase 28 family.

The enzyme catalyses (1,4-alpha-D-galacturonosyl)n+m + H2O = (1,4-alpha-D-galacturonosyl)n + (1,4-alpha-D-galacturonosyl)m.. This is Polygalacturonase (PGU1) from Saccharomyces cerevisiae (strain ATCC 204508 / S288c) (Baker's yeast).